The following is a 380-amino-acid chain: 1-deoxy-D-xylulose 5-phosphate reductoisomerase (380 aa).

NADPH is bound by residues threonine 10, glycine 11, serine 12, isoleucine 13, glycine 35, arginine 36, asparagine 37, and asparagine 121. Lysine 122 provides a ligand contact to 1-deoxy-D-xylulose 5-phosphate. Position 123 (glutamate 123) interacts with NADPH. Aspartate 147 serves as a coordination point for Mn(2+). The 1-deoxy-D-xylulose 5-phosphate site is built by serine 148, glutamate 149, serine 173, and histidine 196. Glutamate 149 contacts Mn(2+). NADPH is bound at residue glycine 202. 1-deoxy-D-xylulose 5-phosphate-binding residues include serine 209, asparagine 214, lysine 215, and glutamate 218. A Mn(2+)-binding site is contributed by glutamate 218.

This sequence belongs to the DXR family. Mg(2+) serves as cofactor. Mn(2+) is required as a cofactor.

The enzyme catalyses 2-C-methyl-D-erythritol 4-phosphate + NADP(+) = 1-deoxy-D-xylulose 5-phosphate + NADPH + H(+). Its pathway is isoprenoid biosynthesis; isopentenyl diphosphate biosynthesis via DXP pathway; isopentenyl diphosphate from 1-deoxy-D-xylulose 5-phosphate: step 1/6. Catalyzes the NADPH-dependent rearrangement and reduction of 1-deoxy-D-xylulose-5-phosphate (DXP) to 2-C-methyl-D-erythritol 4-phosphate (MEP). The sequence is that of 1-deoxy-D-xylulose 5-phosphate reductoisomerase from Agathobacter rectalis (strain ATCC 33656 / DSM 3377 / JCM 17463 / KCTC 5835 / VPI 0990) (Eubacterium rectale).